Reading from the N-terminus, the 122-residue chain is 5'-AMP-activated protein kinase subunit beta-1 (122 aa).

Phosphoserine is present on residues serine 5, serine 61, serine 66, and serine 73. The glycogen-binding domain stretch occupies residues glutamate 33–lysine 122. Residue threonine 113 is modified to Phosphothreonine.

It belongs to the 5'-AMP-activated protein kinase beta subunit family. As to quaternary structure, AMPK is a heterotrimer of an alpha catalytic subunit (PRKAA1 or PRKAA2), a beta (PRKAB1 or PRKAB2) and a gamma non-catalytic subunits (PRKAG1, PRKAG2 or PRKAG3). Interacts with FNIP1 and FNIP2. Phosphorylated when associated with the catalytic subunit (PRKAA1 or PRKAA2). Phosphorylated by ULK1; leading to negatively regulate AMPK activity and suggesting the existence of a regulatory feedback loop between ULK1 and AMPK.

Functionally, non-catalytic subunit of AMP-activated protein kinase (AMPK), an energy sensor protein kinase that plays a key role in regulating cellular energy metabolism. In response to reduction of intracellular ATP levels, AMPK activates energy-producing pathways and inhibits energy-consuming processes: inhibits protein, carbohydrate and lipid biosynthesis, as well as cell growth and proliferation. AMPK acts via direct phosphorylation of metabolic enzymes, and by longer-term effects via phosphorylation of transcription regulators. Also acts as a regulator of cellular polarity by remodeling the actin cytoskeleton; probably by indirectly activating myosin. Beta non-catalytic subunit acts as a scaffold on which the AMPK complex assembles, via its C-terminus that bridges alpha (PRKAA1 or PRKAA2) and gamma subunits (PRKAG1, PRKAG2 or PRKAG3). This is 5'-AMP-activated protein kinase subunit beta-1 (PRKAB1) from Sus scrofa (Pig).